A 443-amino-acid polypeptide reads, in one-letter code: Cyclic AMP receptor 4 (443 aa).

At 1 to 11 the chain is on the extracellular side; sequence MKVLQEINLTY. A glycan (N-linked (GlcNAc...) asparagine) is linked at N8. A helical membrane pass occupies residues 12-32; the sequence is SILVIADFSSIFGCLLVLIAF. The Cytoplasmic portion of the chain corresponds to 33 to 44; the sequence is KKLKLLRNHITR. The helical transmembrane segment at 45–65 threads the bilayer; sequence VIACFCVSSLLKDIISTGLTL. Over 66–89 the chain is Extracellular; that stretch reads SLGPQNEAGSTSFQCYLYAITITY. Residues 90 to 110 form a helical membrane-spanning segment; sequence GSLACWLWTLCLAFSIYNLIV. Residues 111-119 are Cytoplasmic-facing; the sequence is KREPEPEKY. Residues 120–140 form a helical membrane-spanning segment; it reads EKFYHGVCWTIPLICVIVMLA. At 141 to 161 the chain is on the extracellular side; that stretch reads KKTIEPVGNWCWISEKYVGYR. Residues 162–182 form a helical membrane-spanning segment; it reads FGLFYGPFFAIWIISAVLVGL. At 183–208 the chain is on the cytoplasmic side; the sequence is TSRYTYSVIRNSVSDNKDKHMTYQFK. The helical transmembrane segment at 209-229 threads the bilayer; it reads LINYIIVFLLCWVFAIVNRIL. Residues 230 to 263 lie on the Extracellular side of the membrane; the sequence is NGLGYYPTLPNILHTYFSVSHGFFASVTFIYNNP. The chain crosses the membrane as a helical span at residues 264–284; the sequence is LMWRYWGSKIFLIFAKFGYFV. Residues 285–443 lie on the Cytoplasmic side of the membrane; the sequence is ELQRRLDRNK…DEREKKDNKF (159 aa). 2 disordered regions span residues 325–354 and 396–443; these read NDIS…QQSP and SFEI…DNKF. The span at 332–352 shows a compositional bias: low complexity; it reads QQQQQQQQTPQQPQQQFQQQQ. Over residues 396 to 410 the composition is skewed to polar residues; the sequence is SFEITQPSNDLNTIE. Low complexity predominate over residues 411 to 425; it reads NNNNYNNNNNNNNNN. A compositionally biased stretch (basic and acidic residues) spans 429–443; sequence IEKEKDEREKKDNKF.

The protein belongs to the G-protein coupled receptor 5 family. In terms of processing, C-terminal Ser or Thr residues may be phosphorylated.

It localises to the membrane. Its function is as follows. Receptor for cAMP. Regulates axial patterning and cellular differentiation during late development. The activity of this receptor is mediated by G proteins. The chain is Cyclic AMP receptor 4 (carD) from Dictyostelium discoideum (Social amoeba).